The chain runs to 303 residues: tRNA pseudouridine synthase B (303 aa).

Aspartate 47 acts as the Nucleophile in catalysis.

Belongs to the pseudouridine synthase TruB family. Type 1 subfamily.

It catalyses the reaction uridine(55) in tRNA = pseudouridine(55) in tRNA. In terms of biological role, responsible for synthesis of pseudouridine from uracil-55 in the psi GC loop of transfer RNAs. The polypeptide is tRNA pseudouridine synthase B (Legionella pneumophila subsp. pneumophila (strain Philadelphia 1 / ATCC 33152 / DSM 7513)).